A 685-amino-acid chain; its full sequence is Allergen Cr-PI (685 aa).

The signal sequence occupies residues 1–16; the sequence is MKTALVFAAVVAFVAA. The N-linked (GlcNAc...) asparagine glycan is linked to Asn-233.

It belongs to the hemocyanin family.

Its subcellular location is the secreted. The protein resides in the extracellular space. Functionally, larval storage protein (LSP) which may serve as a store of amino acids for synthesis of adult proteins. The sequence is that of Allergen Cr-PI from Periplaneta americana (American cockroach).